A 363-amino-acid chain; its full sequence is Ribosomal RNA large subunit methyltransferase M (363 aa).

Residues S190, 223–226 (CPGG), D242, D262, and D279 each bind S-adenosyl-L-methionine. Residue K308 is the Proton acceptor of the active site.

The protein belongs to the class I-like SAM-binding methyltransferase superfamily. RNA methyltransferase RlmE family. RlmM subfamily. Monomer.

The protein localises to the cytoplasm. It carries out the reaction cytidine(2498) in 23S rRNA + S-adenosyl-L-methionine = 2'-O-methylcytidine(2498) in 23S rRNA + S-adenosyl-L-homocysteine + H(+). Catalyzes the 2'-O-methylation at nucleotide C2498 in 23S rRNA. The sequence is that of Ribosomal RNA large subunit methyltransferase M from Vibrio vulnificus (strain CMCP6).